Consider the following 106-residue polypeptide: U1-lycotoxin-Ls1b (106 aa).

Residues Met-1–Ser-19 form the signal peptide. The propeptide occupies Glu-20–Arg-40. 4 disulfides stabilise this stretch: Cys-43–Cys-58, Cys-50–Cys-67, Cys-57–Cys-85, and Cys-69–Cys-83.

The protein belongs to the neurotoxin 19 (CSTX) family. 04 (U1-Lctx) subfamily. Expressed by the venom gland.

It localises to the secreted. In Lycosa singoriensis (Wolf spider), this protein is U1-lycotoxin-Ls1b.